Here is a 705-residue protein sequence, read N- to C-terminus: Translation initiation factor IF-2 (705 aa).

Residues 40–124 (DDQIKALDKK…QPAAPKEIPS (85 aa)) are disordered. Basic and acidic residues predominate over residues 41–58 (DQIKALDKKFKKEQKNDN). Over residues 59–77 (KQSTQNNHQKSNNQNQNKG) the composition is skewed to low complexity. Basic residues predominate over residues 94–108 (KGNKKNNRNNKKNNK). The tr-type G domain maps to 207 to 376 (ERPAVVTIMG…GLVAEVQELK (170 aa)). A G1 region spans residues 216 to 223 (GHVDHGKT). A GTP-binding site is contributed by 216–223 (GHVDHGKT). The tract at residues 241 to 245 (GITQH) is G2. Residues 262–265 (DTPG) are G3. GTP is bound by residues 262-266 (DTPGH) and 316-319 (NKID). Positions 316–319 (NKID) are G4. The interval 352–354 (SAL) is G5.

Belongs to the TRAFAC class translation factor GTPase superfamily. Classic translation factor GTPase family. IF-2 subfamily.

The protein localises to the cytoplasm. One of the essential components for the initiation of protein synthesis. Protects formylmethionyl-tRNA from spontaneous hydrolysis and promotes its binding to the 30S ribosomal subunits. Also involved in the hydrolysis of GTP during the formation of the 70S ribosomal complex. The chain is Translation initiation factor IF-2 from Staphylococcus aureus (strain MSSA476).